The primary structure comprises 319 residues: Taste receptor type 2 member 39 (319 aa).

Residues 1-16 lie on the Extracellular side of the membrane; that stretch reads MAQPSNYWKQDVLPLS. Residues 17–37 form a helical membrane-spanning segment; the sequence is ILMLTLVATECTIGIIASGIV. The Cytoplasmic segment spans residues 38–65; it reads MAVNAVSWVQKKAISITTRILLLLSVSR. Residues 66–86 traverse the membrane as a helical segment; it reads IGLQSIMLIEITSSIFNVAFY. Residues 87–97 are Extracellular-facing; that stretch reads NSVLYRVSNVS. A glycan (N-linked (GlcNAc...) asparagine) is linked at Asn-95. The helical transmembrane segment at 98–118 threads the bilayer; sequence FVFLNYCSLWFAALLSFFHFV. Over 119–137 the chain is Cytoplasmic; sequence KIANFSYPLFFKLKWRISE. Residues 138–158 form a helical membrane-spanning segment; sequence LMPWLLWLSVFISFSSSMFFS. The Extracellular portion of the chain corresponds to 159-194; the sequence is KHKFTVNNNNSLSNNICNFTMKLYVVETNVVNVSFL. N-linked (GlcNAc...) asparagine glycosylation is found at Asn-167, Asn-176, and Asn-190. A helical transmembrane segment spans residues 195–215; it reads FISGILPPLTMFVATATLLIF. Over 216 to 247 the chain is Cytoplasmic; the sequence is SLRRHTLNMRNSATGSRNPCIEAHMQAIKETS. A helical membrane pass occupies residues 248-268; that stretch reads CFLFLYILNAAALLLSTSNIV. Residues 269 to 273 are Extracellular-facing; sequence DASLF. A helical transmembrane segment spans residues 274–294; sequence WSIVIRIVLPVYPAGHSVLLI. Over 295–319 the chain is Cytoplasmic; that stretch reads QNNPGLRRTWKHLQSQIHLYLQNRF.

It belongs to the G-protein coupled receptor T2R family.

The protein localises to the membrane. In terms of biological role, putative taste receptor which may play a role in the perception of bitterness. The chain is Taste receptor type 2 member 39 (Tas2r39) from Mus musculus (Mouse).